Consider the following 283-residue polypeptide: Undecaprenyl-diphosphatase (283 aa).

A run of 7 helical transmembrane segments spans residues proline 46–phenylalanine 66, valine 95–tryptophan 115, valine 127–methionine 147, leucine 154–isoleucine 174, phenylalanine 200–alanine 220, alanine 227–isoleucine 247, and threonine 259–phenylalanine 279.

It belongs to the UppP family.

The protein resides in the cell inner membrane. The catalysed reaction is di-trans,octa-cis-undecaprenyl diphosphate + H2O = di-trans,octa-cis-undecaprenyl phosphate + phosphate + H(+). Functionally, catalyzes the dephosphorylation of undecaprenyl diphosphate (UPP). Confers resistance to bacitracin. The sequence is that of Undecaprenyl-diphosphatase from Synechococcus sp. (strain CC9902).